The chain runs to 468 residues: Glutamate--tRNA ligase (468 aa).

The 'HIGH' region signature appears at 8–18; it reads PSPTGFLHVGG. The Zn(2+) site is built by cysteine 97, cysteine 99, cysteine 124, and aspartate 126. The 'KMSKS' region signature appears at 236–240; the sequence is KLSKR. Lysine 239 provides a ligand contact to ATP.

Belongs to the class-I aminoacyl-tRNA synthetase family. Glutamate--tRNA ligase type 1 subfamily. As to quaternary structure, monomer. Requires Zn(2+) as cofactor.

It localises to the cytoplasm. The catalysed reaction is tRNA(Glu) + L-glutamate + ATP = L-glutamyl-tRNA(Glu) + AMP + diphosphate. Catalyzes the attachment of glutamate to tRNA(Glu) in a two-step reaction: glutamate is first activated by ATP to form Glu-AMP and then transferred to the acceptor end of tRNA(Glu). This is Glutamate--tRNA ligase from Francisella tularensis subsp. novicida (strain U112).